The primary structure comprises 510 residues: JmjC domain-containing histone demethylation protein 1 (510 aa).

The PHD-type zinc finger occupies 2–53 (PNRCDFCTSSSTKDKQQWTQCDGCDRWVHDVCVSITDPVSYAKYHCPTCTKT). A JmjC domain is found at 216–365 (TLVRELDLVD…TQIDIAGIEV (150 aa)). Position 255 (T255) interacts with substrate. 2 residues coordinate Fe cation: H258 and D260. K275 lines the substrate pocket. H333 serves as a coordination point for Fe cation. Positions 475–510 (KGESKEKHKIESQLPEEKILQGSKLESKEEVQTENF) are disordered. The span at 477-510 (ESKEKHKIESQLPEEKILQGSKLESKEEVQTENF) shows a compositional bias: basic and acidic residues.

It belongs to the JHDM1 histone demethylase family. Fe(2+) serves as cofactor.

Its subcellular location is the nucleus. The enzyme catalyses N(6),N(6)-dimethyl-L-lysyl(36)-[histone H3] + 2 2-oxoglutarate + 2 O2 = L-lysyl(36)-[histone H3] + 2 formaldehyde + 2 succinate + 2 CO2. Its function is as follows. Histone demethylase that specifically demethylates 'Lys-36' of histone H3, thereby playing a central role in histone code. The polypeptide is JmjC domain-containing histone demethylation protein 1 (JHD1) (Yarrowia lipolytica (strain CLIB 122 / E 150) (Yeast)).